We begin with the raw amino-acid sequence, 319 residues long: Inactive hydroxysteroid dehydrogenase-like protein 1 (319 aa).

The tract at residues 2-82 (AAVDSFQLLY…CGASEAIAKA (81 aa)) is required for mitochondria translocation. Residues 74–80 (GASEAIA), Lys-99, and Asp-125 each bind NADP(+).

Belongs to the short-chain dehydrogenases/reductases (SDR) family. 17-beta-HSD 3 subfamily.

The protein localises to the mitochondrion. This Danio rerio (Zebrafish) protein is Inactive hydroxysteroid dehydrogenase-like protein 1 (hsdl1).